A 620-amino-acid chain; its full sequence is 1-deoxy-D-xylulose-5-phosphate synthase (620 aa).

Residues His-75 and 116-118 (AHS) each bind thiamine diphosphate. A Mg(2+)-binding site is contributed by Asp-147. Residues 148-149 (GA), Asn-177, Tyr-284, and Glu-366 contribute to the thiamine diphosphate site. Residue Asn-177 participates in Mg(2+) binding.

This sequence belongs to the transketolase family. DXPS subfamily. Homodimer. Mg(2+) is required as a cofactor. It depends on thiamine diphosphate as a cofactor.

It carries out the reaction D-glyceraldehyde 3-phosphate + pyruvate + H(+) = 1-deoxy-D-xylulose 5-phosphate + CO2. It participates in metabolic intermediate biosynthesis; 1-deoxy-D-xylulose 5-phosphate biosynthesis; 1-deoxy-D-xylulose 5-phosphate from D-glyceraldehyde 3-phosphate and pyruvate: step 1/1. Functionally, catalyzes the acyloin condensation reaction between C atoms 2 and 3 of pyruvate and glyceraldehyde 3-phosphate to yield 1-deoxy-D-xylulose-5-phosphate (DXP). The protein is 1-deoxy-D-xylulose-5-phosphate synthase of Bordetella avium (strain 197N).